Reading from the N-terminus, the 249-residue chain is UDP-2,3-diacylglucosamine hydrolase (249 aa).

Mn(2+)-binding residues include aspartate 7, histidine 9, aspartate 40, asparagine 78, and histidine 113. Position 78–79 (78–79 (NR)) interacts with substrate. The substrate site is built by aspartate 121, serine 159, threonine 163, lysine 166, and histidine 194. Histidine 194 and histidine 196 together coordinate Mn(2+).

It belongs to the LpxH family. Mn(2+) serves as cofactor.

The protein localises to the cell inner membrane. It carries out the reaction UDP-2-N,3-O-bis[(3R)-3-hydroxytetradecanoyl]-alpha-D-glucosamine + H2O = 2-N,3-O-bis[(3R)-3-hydroxytetradecanoyl]-alpha-D-glucosaminyl 1-phosphate + UMP + 2 H(+). It functions in the pathway glycolipid biosynthesis; lipid IV(A) biosynthesis; lipid IV(A) from (3R)-3-hydroxytetradecanoyl-[acyl-carrier-protein] and UDP-N-acetyl-alpha-D-glucosamine: step 4/6. Its function is as follows. Hydrolyzes the pyrophosphate bond of UDP-2,3-diacylglucosamine to yield 2,3-diacylglucosamine 1-phosphate (lipid X) and UMP by catalyzing the attack of water at the alpha-P atom. Involved in the biosynthesis of lipid A, a phosphorylated glycolipid that anchors the lipopolysaccharide to the outer membrane of the cell. The polypeptide is UDP-2,3-diacylglucosamine hydrolase (Pseudomonas fluorescens (strain SBW25)).